A 238-amino-acid chain; its full sequence is Urease subunit alpha (238 aa).

The interval 1–102 (MKLTPKELDK…LVTVHTPIEA (102 aa)) is urease gamma. A urease beta region spans residues 103-238 (NGKLVPGELF…DDNYVKTIKE (136 aa)).

This sequence in the N-terminal section; belongs to the urease gamma subunit family. It in the C-terminal section; belongs to the urease beta subunit family. As to quaternary structure, heterohexamer of 3 UreA (alpha) and 3 UreB (beta) subunits. Four heterohexamers assemble to form a 16 nm dodecameric complex.

The catalysed reaction is urea + 2 H2O + H(+) = hydrogencarbonate + 2 NH4(+). It participates in nitrogen metabolism; urea degradation; CO(2) and NH(3) from urea (urease route): step 1/1. In Helicobacter pylori (strain J99 / ATCC 700824) (Campylobacter pylori J99), this protein is Urease subunit alpha.